The following is a 487-amino-acid chain: Glutamyl-tRNA(Gln) amidotransferase subunit A (487 aa).

Catalysis depends on charge relay system residues lysine 74 and serine 149. The Acyl-ester intermediate role is filled by serine 173.

Belongs to the amidase family. GatA subfamily. As to quaternary structure, heterotrimer of A, B and C subunits.

The enzyme catalyses L-glutamyl-tRNA(Gln) + L-glutamine + ATP + H2O = L-glutaminyl-tRNA(Gln) + L-glutamate + ADP + phosphate + H(+). In terms of biological role, allows the formation of correctly charged Gln-tRNA(Gln) through the transamidation of misacylated Glu-tRNA(Gln) in organisms which lack glutaminyl-tRNA synthetase. The reaction takes place in the presence of glutamine and ATP through an activated gamma-phospho-Glu-tRNA(Gln). This chain is Glutamyl-tRNA(Gln) amidotransferase subunit A, found in Synechococcus sp. (strain WH7803).